The sequence spans 283 residues: Polyamine aminopropyltransferase (283 aa).

The PABS domain maps to 5-240; sequence NTWFTEIHQD…GWWTATMACK (236 aa). Q33 contacts S-methyl-5'-thioadenosine. Residues H64 and D88 each contribute to the spermidine site. S-methyl-5'-thioadenosine contacts are provided by residues D108 and 139–140; that span reads DG. Catalysis depends on D158, which acts as the Proton acceptor. 158 to 161 is a binding site for spermidine; sequence DSTD. An S-methyl-5'-thioadenosine-binding site is contributed by P165.

Belongs to the spermidine/spermine synthase family. As to quaternary structure, homodimer or homotetramer.

The protein localises to the cytoplasm. It catalyses the reaction S-adenosyl 3-(methylsulfanyl)propylamine + putrescine = S-methyl-5'-thioadenosine + spermidine + H(+). Its pathway is amine and polyamine biosynthesis; spermidine biosynthesis; spermidine from putrescine: step 1/1. Functionally, catalyzes the irreversible transfer of a propylamine group from the amino donor S-adenosylmethioninamine (decarboxy-AdoMet) to putrescine (1,4-diaminobutane) to yield spermidine. The sequence is that of Polyamine aminopropyltransferase from Thioalkalivibrio sulfidiphilus (strain HL-EbGR7).